The chain runs to 463 residues: MAAQVATTKVPEVRDITRIERIGAHSHIRGLGLDDALEPRQVSQGMVGQLASRRAAGLILEMIKDGQIAGRAVLIAGQPGTGKTAIAMGIAQSLGPDTPFTALAGSEIFSLEMSKTEALSQAFRKAIGVRIKEETEIIEGEVVEIQIDRPATGTGAKVGKLTLKTTEMETIYDLGTKMIESLSKERVQAGDVITIDKATGKISKLGRSFTRARDYDAMGAQTQFVQCPEGELQKRKEVVHTVSLHEIDVINSRTQGFLALFSGDTGEIKSEVREQINAKVSEWREEGKAEIIPGVLFIDEVHMLDIECFSFLNRALESDLSPVLIMATNRGITRIRGTNYQSPHGIPIDMLDRLLIIATTPYTEKETRQILKIRCEEEDVELSEEAHTVLTRIGQETSLRYAIQLISTAGLVCRKRRGTEVQVEDIKRVYSLFLDEARSSQYMKEYQDSFLFNETQTSQMDTS.

77-84 is an ATP binding site; that stretch reads GQPGTGKT.

The protein belongs to the RuvB family. As to quaternary structure, forms homohexameric rings. Can form a dodecamer with ruvbl1 made of two stacked hexameric rings. Component of the chromatin-remodeling Ino80 complex. Component of some MLL1/MLL complex.

The protein resides in the nucleus. It is found in the dynein axonemal particle. It carries out the reaction ATP + H2O = ADP + phosphate + H(+). Functionally, has double-stranded DNA-stimulated ATPase activity. Has ATP-dependent DNA helicase (5' to 3') activity suggesting a role in nuclear processes such as recombination and transcription. Represses gene activation mediated by beta-catenin. Proposed core component of the chromatin remodeling Ino80 complex which exhibits DNA- and nucleosome-activated ATPase activity and catalyzes ATP-dependent nucleosome sliding. Involved in the endoplasmic reticulum (ER)-associated degradation (ERAD) pathway where it negatively regulates expression of ER stress response genes. May act as a regulator of embryonic heart growth. This is RuvB-like 2 (ruvbl2) from Danio rerio (Zebrafish).